Here is a 726-residue protein sequence, read N- to C-terminus: uncharacterized protein (726 aa).

Catalysis depends on charge relay system residues Ser583 and His698.

It belongs to the peptidase S9B family.

This is an uncharacterized protein from Sinorhizobium fredii (strain NBRC 101917 / NGR234).